Consider the following 504-residue polypeptide: Glutamate--tRNA ligase (504 aa).

The short motif at 25–35 (PSPTGNPHVGL) is the 'HIGH' region element. Residues Cys122, Cys124, Cys149, and Asp151 each contribute to the Zn(2+) site. A 'KMSKS' region motif is present at residues 270 to 274 (KLSKR). Lys273 lines the ATP pocket.

The protein belongs to the class-I aminoacyl-tRNA synthetase family. Glutamate--tRNA ligase type 1 subfamily. In terms of assembly, monomer. Requires Zn(2+) as cofactor.

The protein resides in the cytoplasm. The enzyme catalyses tRNA(Glu) + L-glutamate + ATP = L-glutamyl-tRNA(Glu) + AMP + diphosphate. In terms of biological role, catalyzes the attachment of glutamate to tRNA(Glu) in a two-step reaction: glutamate is first activated by ATP to form Glu-AMP and then transferred to the acceptor end of tRNA(Glu). This is Glutamate--tRNA ligase from Streptomyces griseus subsp. griseus (strain JCM 4626 / CBS 651.72 / NBRC 13350 / KCC S-0626 / ISP 5235).